A 289-amino-acid chain; its full sequence is Nucleotide-binding protein MS1718 (289 aa).

8-15 (GRSGAGKS) contributes to the ATP binding site. 56–59 (DIRN) contributes to the GTP binding site.

It belongs to the RapZ-like family.

Its function is as follows. Displays ATPase and GTPase activities. The sequence is that of Nucleotide-binding protein MS1718 from Mannheimia succiniciproducens (strain KCTC 0769BP / MBEL55E).